The chain runs to 211 residues: Endo-1,4-beta-xylanase 3 (211 aa).

Positions 1 to 27 are cleaved as a signal peptide; it reads MKVTAAFAGLLVTAFAAPVPEPVLVSR. In terms of domain architecture, GH11 spans 28–210; sequence SAGINYVQNY…GAGSASVTIS (183 aa). The Nucleophile role is filled by Glu-106. A disulfide bond links Cys-119 and Cys-138. The active-site Proton donor is the Glu-197.

The protein belongs to the glycosyl hydrolase 11 (cellulase G) family.

The protein localises to the secreted. The catalysed reaction is Endohydrolysis of (1-&gt;4)-beta-D-xylosidic linkages in xylans.. Its pathway is glycan degradation; xylan degradation. The sequence is that of Endo-1,4-beta-xylanase 3 (xynC) from Aspergillus kawachii (strain NBRC 4308) (White koji mold).